We begin with the raw amino-acid sequence, 1183 residues long: Translation initiation factor IF-2 (1183 aa).

Disordered stretches follow at residues 55–512 and 538–574; these read KSKT…KVHI and ASLARPSKPKVGKRNNGKPLTALKKRKKETTRQRQRR. The span at 83 to 99 shows a compositional bias: basic and acidic residues; sequence TQKDQKTEPKKKNHDQT. 2 stretches are compositionally biased toward polar residues: residues 100–143 and 165–177; these read ELSQ…QITA and KPLTQAESTIPQS. Positions 220 to 229 are enriched in basic and acidic residues; it reads PKIDIQDKKP. A compositionally biased stretch (polar residues) spans 231-252; it reads QPNNQKAKTRINQGEISPQKVG. The segment covering 253–267 has biased composition (low complexity); that stretch reads QGNIQKIKSQNKQNQ. Positions 288–304 are enriched in basic and acidic residues; that stretch reads IRREKPVNKPHTNEVRN. Polar residues-rich tracts occupy residues 324 to 349 and 357 to 367; these read QGLSNRPGSNNKIGGTGRPGSQNRQG and NRTTQGQNRPG. Basic and acidic residues predominate over residues 485-499; the sequence is GRPDWDDSAKLDALR. Basic residues-rich tracts occupy residues 544-553 and 560-574; these read SKPKVGKRNN and LKKRKKETTRQRQRR. The tr-type G domain maps to 675–847; sequence RRPPVVTVMG…VLLVTEVEDL (173 aa). The segment at 684-691 is G1; that stretch reads GHVDHGKT. GTP is bound at residue 684-691; the sequence is GHVDHGKT. The segment at 709–713 is G2; that stretch reads GITQH. Positions 734–737 are G3; it reads DTPG. Residues 734–738 and 788–791 contribute to the GTP site; these read DTPGH and NKID. The segment at 788 to 791 is G4; the sequence is NKID. The interval 824–826 is G5; it reads SAI.

Belongs to the TRAFAC class translation factor GTPase superfamily. Classic translation factor GTPase family. IF-2 subfamily.

The protein resides in the cytoplasm. In terms of biological role, one of the essential components for the initiation of protein synthesis. Protects formylmethionyl-tRNA from spontaneous hydrolysis and promotes its binding to the 30S ribosomal subunits. Also involved in the hydrolysis of GTP during the formation of the 70S ribosomal complex. This is Translation initiation factor IF-2 from Prochlorococcus marinus (strain NATL1A).